The following is a 184-amino-acid chain: uncharacterized protein (184 aa).

The 64-residue stretch at 72–135 (RKSQAILLIG…GIALGSAVKV (64 aa)) folds into the 4Fe-4S domain. 4 residues coordinate [4Fe-4S] cluster: C92, C95, C100, and C118.

The cofactor is [4Fe-4S] cluster.

This is an uncharacterized protein from Archaeoglobus fulgidus (strain ATCC 49558 / DSM 4304 / JCM 9628 / NBRC 100126 / VC-16).